The following is a 426-amino-acid chain: uncharacterized protein (426 aa).

Residue His277 coordinates Zn(2+). Glu278 is an active-site residue. 2 residues coordinate Zn(2+): His281 and Glu357.

It belongs to the peptidase M48B family. The cofactor is Zn(2+).

This is an uncharacterized protein from Bacillus subtilis (strain 168).